The primary structure comprises 314 residues: Serine/threonine-protein phosphatase PP2A-4 catalytic subunit (314 aa).

Positions 62, 64, 90, and 122 each coordinate Mn(2+). The active-site Proton donor is the H123. Residues H172 and H246 each contribute to the Mn(2+) site.

Belongs to the PPP phosphatase family. PP-2A subfamily. The cofactor is Mn(2+).

It localises to the cytoplasm. It catalyses the reaction O-phospho-L-seryl-[protein] + H2O = L-seryl-[protein] + phosphate. The enzyme catalyses O-phospho-L-threonyl-[protein] + H2O = L-threonyl-[protein] + phosphate. The polypeptide is Serine/threonine-protein phosphatase PP2A-4 catalytic subunit (PP2A4) (Oryza sativa subsp. japonica (Rice)).